Consider the following 173-residue polypeptide: Dual-action ribosomal maturation protein DarP (173 aa).

The protein belongs to the DarP family.

Its subcellular location is the cytoplasm. Member of a network of 50S ribosomal subunit biogenesis factors which assembles along the 30S-50S interface, preventing incorrect 23S rRNA structures from forming. Promotes peptidyl transferase center (PTC) maturation. In Pseudomonas putida (strain W619), this protein is Dual-action ribosomal maturation protein DarP.